The chain runs to 185 residues: Elongation factor P 1 (185 aa).

The protein belongs to the elongation factor P family.

The protein resides in the cytoplasm. The protein operates within protein biosynthesis; polypeptide chain elongation. Functionally, involved in peptide bond synthesis. Stimulates efficient translation and peptide-bond synthesis on native or reconstituted 70S ribosomes in vitro. Probably functions indirectly by altering the affinity of the ribosome for aminoacyl-tRNA, thus increasing their reactivity as acceptors for peptidyl transferase. This is Elongation factor P 1 (efp1) from Chlamydia muridarum (strain MoPn / Nigg).